The chain runs to 33 residues: Cytochrome b6-f complex subunit 8 (33 aa).

The chain crosses the membrane as a helical span at residues 2-22 (IFTLGWASLAAIFTFSIAMVV).

Belongs to the PetN family. In terms of assembly, the 4 large subunits of the cytochrome b6-f complex are cytochrome b6, subunit IV (17 kDa polypeptide, PetD), cytochrome f and the Rieske protein, while the 4 small subunits are PetG, PetL, PetM and PetN. The complex functions as a dimer.

It localises to the cellular thylakoid membrane. Its function is as follows. Component of the cytochrome b6-f complex, which mediates electron transfer between photosystem II (PSII) and photosystem I (PSI), cyclic electron flow around PSI, and state transitions. The sequence is that of Cytochrome b6-f complex subunit 8 from Prochlorococcus marinus (strain NATL2A).